The chain runs to 161 residues: MKAVSPVRPSGRKAPSGCGGGELALRCLAEHGHSLGGSAAAAAAAAAARCKAAEAAADEPALCLQCDMNDCYSRLRRLVPTIPPNKKVSKVEILPHVIDYILDLQLALETHPALLRQPPPPAPPHHPAGTCPAAPPRTPLTALNTDPAGAVNKQGDSILCR.

The bHLH domain occupies 52–104 (AAEAAADEPALCLQCDMNDCYSRLRRLVPTIPPNKKVSKVEILPHVIDYILDL). The disordered stretch occupies residues 116 to 161 (RQPPPPAPPHHPAGTCPAAPPRTPLTALNTDPAGAVNKQGDSILCR). Residues 117-126 (QPPPPAPPHH) show a composition bias toward pro residues.

Heterodimer with other HLH proteins.

It is found in the nucleus. Transcriptional regulator (lacking a basic DNA binding domain) which negatively regulates the basic helix-loop-helix (bHLH) transcription factors by forming heterodimers and inhibiting their DNA binding and transcriptional activity. Implicated in regulating a variety of cellular processes, including cellular growth, senescence, differentiation, apoptosis, angiogenesis, and neoplastic transformation. The chain is DNA-binding protein inhibitor ID-4 (ID4) from Sus scrofa (Pig).